The sequence spans 492 residues: Catalase isozyme B (492 aa).

The disordered stretch occupies residues 1-20 (MDPYKHRPSSGSNSTFWTTN). The segment covering 9 to 20 (SSGSNSTFWTTN) has biased composition (polar residues). Arg-62 contributes to the heme binding site. The active site involves His-65. Position 102 (Arg-102) interacts with heme. Asn-138 is a catalytic residue. Position 151 (Phe-151) interacts with heme. Residue Tyr-210 is modified to Phosphotyrosine. The 3-(S-cysteinyl)-tyrosine (Cys-Tyr) cross-link spans 325–348 (CPAIIVPGIHYSDDKLLQTRIFSY). Arg-344, Tyr-348, and Arg-355 together coordinate heme. Residues 484-492 (SRLNLKPNM) carry the Peroxisome targeting signal motif.

This sequence belongs to the catalase family. Homotetramer. Interacts with GLO1 and GLO4; these interactions are disturbed by alpha-hydroxy-2-pyridinemethanesulfonic acid (HPMS) and salicylic acid (SA). Interacts with STRK1 at the plasma membrane. Requires heme as cofactor. In terms of tissue distribution, predominantly expressed in roots and, at low levels, in leaves (e.g. sheaths). Detected in seeds. Also present in panicles and culms. Observed in stems and anthers.

It is found in the peroxisome. The protein resides in the glyoxysome. It localises to the cell membrane. The enzyme catalyses 2 H2O2 = O2 + 2 H2O. With respect to regulation, strongly inhibited by beta-mercaptoethanol, sodium azide and potassium cyanide. Slightly repressed by 3-amino-1,2,4-triazole (3-AT). Activity is repressed proportionally to increased concentration of NaCl, KCl, LiCl and MgCl(2). Functionally, occurs in almost all aerobically respiring organisms and serves to protect cells from the toxic effects of hydrogen peroxide. May prevent the excessive accumulation of H(2)O(2) during water stress in response to the accumulation of abscisic acid (ABA). Involved in the modulation of ROS levels related to root growth regulation. Required for pollen viability and floret fertility upon heat stress (HS) by detoxifying reactive oxygen species (ROS) and malondialdehyde (MDA) accumulation in developing anthers exposed to HS. The sequence is that of Catalase isozyme B (CATB) from Oryza sativa subsp. japonica (Rice).